The primary structure comprises 658 residues: Integrator complex subunit 9 (658 aa).

The disordered stretch occupies residues Lys-547–Ser-586. The Nuclear localization signal signature appears at Lys-566–Arg-570.

This sequence belongs to the metallo-beta-lactamase superfamily. RNA-metabolizing metallo-beta-lactamase-like family. INTS9 subfamily. Component of the Integrator complex, composed of core subunits INTS1, INTS2, INTS3, INTS4, INTS5, INTS6, INTS7, INTS8, INTS9/RC74, INTS10, INTS11/CPSF3L, INTS12, INTS13, INTS14 and INTS15. The core complex associates with protein phosphatase 2A subunits PPP2CA and PPP2R1A, to form the Integrator-PP2A (INTAC) complex. INTS9 is part of the RNA endonuclease subcomplex, composed of INTS4, INTS9, INTS11 and inositol hexakisphosphate (InsP6).

The protein localises to the nucleus. It is found in the cytoplasm. Component of the integrator complex, a multiprotein complex that terminates RNA polymerase II (Pol II) transcription in the promoter-proximal region of genes. The integrator complex provides a quality checkpoint during transcription elongation by driving premature transcription termination of transcripts that are unfavorably configured for transcriptional elongation: the complex terminates transcription by (1) catalyzing dephosphorylation of the C-terminal domain (CTD) of Pol II subunit POLR2A/RPB1 and SUPT5H/SPT5, (2) degrading the exiting nascent RNA transcript via endonuclease activity and (3) promoting the release of Pol II from bound DNA. The integrator complex is also involved in terminating the synthesis of non-coding Pol II transcripts, such as enhancer RNAs (eRNAs), small nuclear RNAs (snRNAs), telomerase RNAs and long non-coding RNAs (lncRNAs). This Xenopus laevis (African clawed frog) protein is Integrator complex subunit 9 (ints9).